Consider the following 565-residue polypeptide: Periplasmic trehalase (565 aa).

A signal peptide spans 1-30 (MKSPAPSRPQKMALIPACIFLCFAALSVQA). Substrate is bound by residues Arg-152, 159–160 (WD), Asn-196, 205–207 (RSQ), 277–279 (RPE), and Gly-310. Residues Asp-312 and Glu-496 each act as proton donor/acceptor in the active site. A substrate-binding site is contributed by Glu-511. The tract at residues 539–565 (CDNVPATRPLSESTTQPVKQKEAEPTP) is disordered.

Belongs to the glycosyl hydrolase 37 family. As to quaternary structure, monomer.

It localises to the periplasm. The enzyme catalyses alpha,alpha-trehalose + H2O = alpha-D-glucose + beta-D-glucose. In terms of biological role, provides the cells with the ability to utilize trehalose at high osmolarity by splitting it into glucose molecules that can subsequently be taken up by the phosphotransferase-mediated uptake system. The sequence is that of Periplasmic trehalase from Escherichia coli O17:K52:H18 (strain UMN026 / ExPEC).